The primary structure comprises 115 residues: MRANRVGEQMKKELGDIISRKLKDPRIGFLTVTDVRVSGDLQIAKVYISVLGGEKKKEEALKGLEKAKGFIRSEIGSRIRLRKTPELEFEFDESIEYGNRIETLIHELHSDKPSE.

It belongs to the RbfA family. Monomer. Binds 30S ribosomal subunits, but not 50S ribosomal subunits or 70S ribosomes.

Its subcellular location is the cytoplasm. One of several proteins that assist in the late maturation steps of the functional core of the 30S ribosomal subunit. Associates with free 30S ribosomal subunits (but not with 30S subunits that are part of 70S ribosomes or polysomes). Required for efficient processing of 16S rRNA. May interact with the 5'-terminal helix region of 16S rRNA. The sequence is that of Ribosome-binding factor A from Bacillus velezensis (strain DSM 23117 / BGSC 10A6 / LMG 26770 / FZB42) (Bacillus amyloliquefaciens subsp. plantarum).